The primary structure comprises 455 residues: Bifunctional protein GlmU (455 aa).

The tract at residues 1–226 (MSLEIVILAA…PMEVQGANDR (226 aa)) is pyrophosphorylase. UDP-N-acetyl-alpha-D-glucosamine is bound by residues 8-11 (LAAG), Lys-22, Gln-73, 78-79 (GT), 99-101 (YGD), Gly-136, Glu-151, Asn-166, and Asn-224. Asp-101 is a binding site for Mg(2+). Residue Asn-224 coordinates Mg(2+). A linker region spans residues 227-247 (KQLSELERHYQLRAGRRLMAQ). The interval 248-455 (GVTLRDPARF…WKRPEKIKKN (208 aa)) is N-acetyltransferase. Residues Arg-330 and Lys-348 each contribute to the UDP-N-acetyl-alpha-D-glucosamine site. His-360 (proton acceptor) is an active-site residue. UDP-N-acetyl-alpha-D-glucosamine-binding residues include Tyr-363 and Asn-374. Acetyl-CoA-binding positions include Ala-377, 383–384 (NY), Ser-402, Ala-420, and Arg-437.

This sequence in the N-terminal section; belongs to the N-acetylglucosamine-1-phosphate uridyltransferase family. The protein in the C-terminal section; belongs to the transferase hexapeptide repeat family. Homotrimer. Requires Mg(2+) as cofactor.

It localises to the cytoplasm. It catalyses the reaction alpha-D-glucosamine 1-phosphate + acetyl-CoA = N-acetyl-alpha-D-glucosamine 1-phosphate + CoA + H(+). The catalysed reaction is N-acetyl-alpha-D-glucosamine 1-phosphate + UTP + H(+) = UDP-N-acetyl-alpha-D-glucosamine + diphosphate. Its pathway is nucleotide-sugar biosynthesis; UDP-N-acetyl-alpha-D-glucosamine biosynthesis; N-acetyl-alpha-D-glucosamine 1-phosphate from alpha-D-glucosamine 6-phosphate (route II): step 2/2. The protein operates within nucleotide-sugar biosynthesis; UDP-N-acetyl-alpha-D-glucosamine biosynthesis; UDP-N-acetyl-alpha-D-glucosamine from N-acetyl-alpha-D-glucosamine 1-phosphate: step 1/1. It functions in the pathway bacterial outer membrane biogenesis; LPS lipid A biosynthesis. Catalyzes the last two sequential reactions in the de novo biosynthetic pathway for UDP-N-acetylglucosamine (UDP-GlcNAc). The C-terminal domain catalyzes the transfer of acetyl group from acetyl coenzyme A to glucosamine-1-phosphate (GlcN-1-P) to produce N-acetylglucosamine-1-phosphate (GlcNAc-1-P), which is converted into UDP-GlcNAc by the transfer of uridine 5-monophosphate (from uridine 5-triphosphate), a reaction catalyzed by the N-terminal domain. This is Bifunctional protein GlmU from Pseudomonas fluorescens (strain Pf0-1).